The following is a 442-amino-acid chain: Putative ammonium transporter sll1017 (442 aa).

The next 13 helical transmembrane spans lie at asparagine 5–alanine 25, leucine 44–glutamate 64, threonine 81–glycine 101, proline 104–valine 124, tryptophan 133–glycine 153, methionine 155–serine 175, phenylalanine 193–valine 213, glycine 240–valine 260, methionine 269–phenylalanine 289, proline 299–cysteine 319, tryptophan 325–leucine 345, valine 354–phenylalanine 374, and isoleucine 386–valine 406.

It belongs to the ammonia transporter channel (TC 1.A.11.2) family.

It localises to the cell membrane. In Synechocystis sp. (strain ATCC 27184 / PCC 6803 / Kazusa), this protein is Putative ammonium transporter sll1017.